A 207-amino-acid polypeptide reads, in one-letter code: LexA repressor (207 aa).

The H-T-H motif DNA-binding region spans Val-33–Asn-52. Residues Ser-129 and Lys-166 each act as for autocatalytic cleavage activity in the active site.

Belongs to the peptidase S24 family. Homodimer.

The enzyme catalyses Hydrolysis of Ala-|-Gly bond in repressor LexA.. Represses a number of genes involved in the response to DNA damage (SOS response), including recA and lexA. In the presence of single-stranded DNA, RecA interacts with LexA causing an autocatalytic cleavage which disrupts the DNA-binding part of LexA, leading to derepression of the SOS regulon and eventually DNA repair. The polypeptide is LexA repressor (Oleidesulfovibrio alaskensis (strain ATCC BAA-1058 / DSM 17464 / G20) (Desulfovibrio alaskensis)).